Reading from the N-terminus, the 894-residue chain is MANIDPYRTEEELVEDDEEVDMSFLPPFAKGTENEVLYVENARMERRLERTERALETNMDRLHIMDEHLKNVQQELKYTQTRVEAKNKEIESEKHLNAMAEREMGRLKKDIGKMEAERQELADKINGLQNQIYKNNEKLDQFKMLMNWNQEELEQWALAERQKAEDNAALEKYRHADDGKVKELTLALERVSKQVVGRKEELEAEVVETQAAQIQLDKAAEDFRKLHVERQDLIRQWEEAVEAMRHRDAAIAAASEQFAMQKDVLRERKRELDAQARFLENETLNTKEADARVAYYEREVGKQRDVLAREQARTEELNNQVELVKATLSKAATELAQRTVENKQAREDLDAKRQKLDAARKRFVVLKRKLENEFGNLDSMEAKASELEAMRRGEEARLKAILKEHELLKKEQYKRSQVLFDLRQKERELISEISGGQGQNKNLAARIHALDEQVVARAGGVRSEEETRALNARIEKLTAILEGVKRAEDDLLAARRANTSLRADRAKLDETISTLKLENDMVSRQVKGSVEAREKALVDHDVLALEVKRLRDILAAHADEVFSLENRKQQLALSMEERKQEVEVHRDGLRAELRLLREDVHRITLELKERLLRCEKLQAKFEIISAKHRGSGEDDGEERTQAYYVIKAAQEREALQREGDDLDGRIRVAEKEVAALEATLAQLMAVNTNFAASYKKVGSKEAFEERAALRDKLDKAYDKLKARRADEAAIAGDIQVSEARLSNLGQEQRSLQALVDDMTRRKAEAQRQLDEQREKLGRALGRTDKLRQKLGLANSPQGADVELAEVRDVTRAMLLELKALALANPGAMIAEACEAAGIRLPSGGSNPPSLGGSRPGSARSQTSLGSVRSARSVASQQRGGMGGSPAVRTIQLGA.

4 coiled-coil regions span residues 32-143 (TENE…DQFK), 187-411 (ALER…LKKE), 461-609 (VRSE…ELKE), and 647-788 (KAAQ…KLRQ). Over residues 844-857 (GSNPPSLGGSRPGS) the composition is skewed to low complexity. Residues 844 to 894 (GSNPPSLGGSRPGSARSQTSLGSVRSARSVASQQRGGMGGSPAVRTIQLGA) form a disordered region.

Belongs to the CCDC39 family. As to quaternary structure, interacts with CCDC40/FAP172. Phosphorylated in flagella.

It localises to the cell projection. Its subcellular location is the cilium. The protein localises to the flagellum. Its function is as follows. Required for assembly of dynein regulatory complex (DRC) and inner dynein arm complexes, which are responsible for ciliary beat regulation, by acting as a molecular ruler that determines the 96 nanometer (nm) repeat length and arrangements of components in cilia and flagella. Together with CCDC40/FAP172 forms a 96-nm-long complex in flagella. This complex does not act as a physical ruler, but rather act as a negative regulator for radial spokes: the complex lays along specific protofilaments, masking radial spoke binding sites and allowing recruitment of inner dynein arm (IDA) and nexin-dynein regulatory complexes (N-DRC). The protein is Coiled-coil domain-containing protein 39 (CCDC39) of Chlamydomonas reinhardtii (Chlamydomonas smithii).